A 77-amino-acid polypeptide reads, in one-letter code: RNA-binding protein Hfq (77 aa).

In terms of domain architecture, Sm spans D10–I70.

This sequence belongs to the Hfq family. Homohexamer.

Its function is as follows. RNA chaperone that binds small regulatory RNA (sRNAs) and mRNAs to facilitate mRNA translational regulation in response to envelope stress, environmental stress and changes in metabolite concentrations. Also binds with high specificity to tRNAs. This Cereibacter sphaeroides (strain ATCC 17029 / ATH 2.4.9) (Rhodobacter sphaeroides) protein is RNA-binding protein Hfq.